We begin with the raw amino-acid sequence, 92 residues long: Co-chaperonin GroES (92 aa).

The protein belongs to the GroES chaperonin family. In terms of assembly, heptamer of 7 subunits arranged in a ring. Interacts with the chaperonin GroEL.

The protein localises to the cytoplasm. Its function is as follows. Together with the chaperonin GroEL, plays an essential role in assisting protein folding. The GroEL-GroES system forms a nano-cage that allows encapsulation of the non-native substrate proteins and provides a physical environment optimized to promote and accelerate protein folding. GroES binds to the apical surface of the GroEL ring, thereby capping the opening of the GroEL channel. This is Co-chaperonin GroES from Thermotoga maritima (strain ATCC 43589 / DSM 3109 / JCM 10099 / NBRC 100826 / MSB8).